Here is a 325-residue protein sequence, read N- to C-terminus: Tryptophan--tRNA ligase (325 aa).

ATP-binding positions include 9-11 (QPS) and 17-18 (GN). Residues 10-18 (PSGILHIGN) carry the 'HIGH' region motif. An L-tryptophan-binding site is contributed by aspartate 132. ATP contacts are provided by residues 144 to 146 (GKD), valine 184, and 191 to 195 (KMSKS). The short motif at 191–195 (KMSKS) is the 'KMSKS' region element.

Belongs to the class-I aminoacyl-tRNA synthetase family. Homodimer.

Its subcellular location is the cytoplasm. It catalyses the reaction tRNA(Trp) + L-tryptophan + ATP = L-tryptophyl-tRNA(Trp) + AMP + diphosphate + H(+). Functionally, catalyzes the attachment of tryptophan to tRNA(Trp). The protein is Tryptophan--tRNA ligase of Fusobacterium nucleatum subsp. nucleatum (strain ATCC 25586 / DSM 15643 / BCRC 10681 / CIP 101130 / JCM 8532 / KCTC 2640 / LMG 13131 / VPI 4355).